The sequence spans 1372 residues: MSVVNFYGQLSNTQQFDQIRINIASPDQVRSWSFGEVTKPETINYRTFKPEKDGLFCARIFGPVKDYECLCGKYKRMKNRGITCEKCGVEVTVSRVRRERMGHIELAAPVAHIWFLKSLPSRISTLLDMTMRDVEKILYFENYVVVDPGLSILQKGELLTEEELQKAKDKYGEDAFTASIGAEVIQQMLKELDFSKLKQELYDELHITSSEVKKKKLVKRLKLVEDFLESENKPEWMIMDVLPVIPPEIRPLVMLDGGRFATSDLNELYRRVINRNNRLKKLIESKAPDIIVRNEKRMLQEAVDALFDNGRRGRAAKNANKRPFKSLSDMLKGKQGRFRQNLLGKRVDYSGRSVIVVGPELKLHQCGLPKKMALELFKPFIYSKLELYGIATTIKAAKRMVEAEKPEVWDVLEEVIREHPVLLNRAPTLHRLGIQAFEPLLIEGKAIQLHPLVCAAFNADFDGDQMAVHIPLSIEAQLEARVFMMSTNNILSPANGRPIIVPDKDIVLGLYYLTIAFDNEVGEGMMFSDLAEMEHALYNKFITIHTKIKYRRDQLNAEGKMVPVIIDTTYGRLMVGELLPSNPNIEFKCINKQLTKKDISLVIDLVYRHCGQKATVIFADQLMKLGFKYACSSGISFGMDDMVVPESKSTHINETQLEIKEFEQQYSNGLITYGEKYNKVVDAWSRCTDRVANDMMKEIATPPINDYPNHQRINAIYMMAISGARGSFQQIKQLGGMRGLMTKSNGQIIQTPIISNFKEGLTEFECFNSANGMRKGQIDTALKTASSGYLTRKLVDVAQDCIITEKDCGTDKGIEVKSVIEGGEIIVPLAEKILGRTAAIDIFHPVTNDLILNKGELINESKLEQIESAGLDRIMIKSVLTCESSTGICSICYGRDLATGTLVSEGEAIGVIAAQSIGEPGTQLTMRTFHIGGAATKGAEVSSVEASYDAKVKIISRNVVINSEERKIVMSRNCELLLLDDNGNEKARHKIPYGARLLVDDGDIVIKTQKLAEWDPYTIPIITEKSGKVLFKDMVEGISIRDVTDEATGIPSKVIIESKQYSRGAELRPRIQLLDSKGEVITLSNGLEARYYLPVGAVLSVEDGIQISVGDIIARIPKESTTTKDITGGLPRVAELVEARRPKDHAVIAEVDGRVEFGKDYKSKRRIIIHPIDGTLSIEYMVPKGKHVVVNEGDFVKKGDLLIDGNPVLQDILKVMGVEVLANYIVKEVQAVYRLQGVKIDDKHIEVIIRQMLQKVEVTDSGGTTLLVGEKIDRHEFDEINEKAMKNGLKPAEAQLILQGITKASLQTRSFISAASFQETTRVLTEAAIAGKVDKLRGLKENVIVGRLVPAGTGYFMDKMRKAAVKLDEENV.

Zn(2+) contacts are provided by Cys69, Cys71, Cys84, and Cys87. Mg(2+) contacts are provided by Asp460, Asp462, and Asp464. Positions 808, 882, 889, and 892 each coordinate Zn(2+).

The protein belongs to the RNA polymerase beta' chain family. The RNAP catalytic core consists of 2 alpha, 1 beta, 1 beta' and 1 omega subunit. When a sigma factor is associated with the core the holoenzyme is formed, which can initiate transcription. Requires Mg(2+) as cofactor. Zn(2+) is required as a cofactor.

The catalysed reaction is RNA(n) + a ribonucleoside 5'-triphosphate = RNA(n+1) + diphosphate. Its function is as follows. DNA-dependent RNA polymerase catalyzes the transcription of DNA into RNA using the four ribonucleoside triphosphates as substrates. This chain is DNA-directed RNA polymerase subunit beta', found in Rickettsia typhi (strain ATCC VR-144 / Wilmington).